The sequence spans 289 residues: Phosphate import ATP-binding protein PstB (289 aa).

The segment at 1–37 (MRSIDRPGGQAARPTIGSVAGASNTRTRDARSLPDTP) is disordered. Residues 41–284 (AAAENFSFYY…PVRRETEDYI (244 aa)) form the ABC transporter domain. An ATP-binding site is contributed by 73–80 (GPSGCGKS).

The protein belongs to the ABC transporter superfamily. Phosphate importer (TC 3.A.1.7) family. The complex is composed of two ATP-binding proteins (PstB), two transmembrane proteins (PstC and PstA) and a solute-binding protein (PstS).

It is found in the cell inner membrane. It carries out the reaction phosphate(out) + ATP + H2O = ADP + 2 phosphate(in) + H(+). In terms of biological role, part of the ABC transporter complex PstSACB involved in phosphate import. Responsible for energy coupling to the transport system. This Aromatoleum aromaticum (strain DSM 19018 / LMG 30748 / EbN1) (Azoarcus sp. (strain EbN1)) protein is Phosphate import ATP-binding protein PstB.